The primary structure comprises 310 residues: Biotin synthase (310 aa).

The region spanning 34-262 (GRVQLCALVN…TAQIRLSAGR (229 aa)) is the Radical SAM core domain. 3 residues coordinate [4Fe-4S] cluster: Cys49, Cys53, and Cys56. Cys93, Cys125, Cys185, and Arg257 together coordinate [2Fe-2S] cluster.

The protein belongs to the radical SAM superfamily. Biotin synthase family. As to quaternary structure, homodimer. [4Fe-4S] cluster is required as a cofactor. [2Fe-2S] cluster serves as cofactor.

It catalyses the reaction (4R,5S)-dethiobiotin + (sulfur carrier)-SH + 2 reduced [2Fe-2S]-[ferredoxin] + 2 S-adenosyl-L-methionine = (sulfur carrier)-H + biotin + 2 5'-deoxyadenosine + 2 L-methionine + 2 oxidized [2Fe-2S]-[ferredoxin]. It participates in cofactor biosynthesis; biotin biosynthesis; biotin from 7,8-diaminononanoate: step 2/2. In terms of biological role, catalyzes the conversion of dethiobiotin (DTB) to biotin by the insertion of a sulfur atom into dethiobiotin via a radical-based mechanism. In Synechococcus sp. (strain JA-3-3Ab) (Cyanobacteria bacterium Yellowstone A-Prime), this protein is Biotin synthase.